Consider the following 66-residue polypeptide: MAFLKKSLFLVLFLGLVSLSICEEEKRETEEKEYDQGEDDKSEEKRFLSLIPHIVSGVAALAKHLG.

The first 22 residues, 1-22, serve as a signal peptide directing secretion; it reads MAFLKKSLFLVLFLGLVSLSIC. A propeptide spanning residues 23–46 is cleaved from the precursor; it reads EEEKRETEEKEYDQGEDDKSEEKR. Residue leucine 65 is modified to Leucine amide.

The protein belongs to the frog skin active peptide (FSAP) family. Phylloseptin subfamily. As to expression, expressed by the skin glands.

It is found in the secreted. The protein localises to the target cell membrane. Functionally, antimicrobial peptide with activity against only a few strains of Gram-positive bacteria (S.aureus and B.megaterium). Acts in a synergistic effect in combination with Plasticin-B1 at doses that are not active alone. This Phyllomedusa bicolor (Two-colored leaf frog) protein is Phylloseptin-B1.